The chain runs to 312 residues: Small ribosomal subunit protein RACK1 (312 aa).

WD repeat units lie at residues 9–42 (GHRGWVTSLACPQQAGSYIKVVSTSRDGTAISWK), 63–93 (GHTGFVSCVSLAHATDYALTASWDRSIRMWD), 105–135 (KHTKDVLAVAFSPDDRLIVSAGRDNVIRVWN), 148–180 (GHEDWVSSICFSPSLEHPIVVSGSWDNTIKVWN), 192–222 (GHSNYVSTVTVSPDGSLCASGGKDGAALLWD), 233–262 (NVESPINQIAFSPNRFWMCVATERSLSVYD), and 279–307 (PSECISIAWSADGNTLYSGHKDNLIRVWS).

The protein belongs to the WD repeat G protein beta family. Ribosomal protein RACK1 subfamily.

This chain is Small ribosomal subunit protein RACK1, found in Leishmania chagasi.